Reading from the N-terminus, the 160-residue chain is NKEKDENLHEPPSSDDMKSDDESSQKDIKVSSRGRTSTNEDEDLNPEQKIEREKERRMANNARERLRVRDINEAFKELGRMCQLHLKSEKPQTKLLILHQAVAVILSLEQQVRERNLNPKAACLKRREEEKVSVVSAEPPTTLPGTHPGLSETTNPMGHM.

The segment at 1 to 58 (NKEKDENLHEPPSSDDMKSDDESSQKDIKVSSRGRTSTNEDEDLNPEQKIEREKERRM) is disordered. Residues 15 to 30 (DDMKSDDESSQKDIKV) show a composition bias toward basic and acidic residues. Residue Ser19 is modified to Phosphoserine. Lys29 participates in a covalent cross-link: Glycyl lysine isopeptide (Lys-Gly) (interchain with G-Cter in SUMO2). The residue at position 36 (Thr36) is a Phosphothreonine. Ser37 is modified (phosphoserine). Residues 46 to 58 (PEQKIEREKERRM) show a composition bias toward basic and acidic residues. The 54-residue stretch at 55–108 (ERRMANNARERLRVRDINEAFKELGRMCQLHLKSEKPQTKLLILHQAVAVILSL) folds into the bHLH domain. Residues Lys87 and Lys131 each participate in a glycyl lysine isopeptide (Lys-Gly) (interchain with G-Cter in SUMO2) cross-link. The interval 110 to 133 (QQVRERNLNPKAACLKRREEEKVS) is class A specific domain. Residues 132–160 (VSVVSAEPPTTLPGTHPGLSETTNPMGHM) are disordered. Positions 139–150 (PPTTLPGTHPGL) are enriched in low complexity. A compositionally biased stretch (polar residues) spans 151-160 (SETTNPMGHM).

In terms of assembly, efficient DNA binding requires dimerization with another bHLH protein. Forms homo- or heterooligomers with myogenin, E12 and ITF2 proteins. Interacts with PTF1A. Interacts with RUNX1T1. Interacts with NEUROD2. Interacts with BHLHA9.

It is found in the nucleus. Transcriptional regulator. Involved in the initiation of neuronal differentiation. Activates transcription by binding to the E box (5'-CANNTG-3'). May be involved in the functional network that regulates the development of the GnRH axis. The polypeptide is Transcription factor 12 (TCF12) (Papio hamadryas (Hamadryas baboon)).